The primary structure comprises 432 residues: Interleukin-11 receptor subunit alpha-2 (432 aa).

An N-terminal signal peptide occupies residues 1–23 (MSSSCSGLTRVLVAVATALVSSS). The Extracellular portion of the chain corresponds to 24–372 (SPCPQAWGPP…DPLEQVAVLA (349 aa)). One can recognise an Ig-like C2-type domain in the interval 27-110 (PQAWGPPGVQ…SGGMVTLKLG (84 aa)). Intrachain disulfides connect Cys48–Cys94, Cys120–Cys130, and Cys170–Cys180. Fibronectin type-III domains lie at 112 to 219 (PPAR…LRPD) and 220 to 317 (PPQG…TPST). Asn127 is a glycosylation site (N-linked (GlcNAc...) asparagine). Residues 151–170 (KTLPGAESQRESPSTGPWPC) are disordered. N-linked (GlcNAc...) asparagine glycosylation is present at Asn194. A WSXWS motif motif is present at residues 304–308 (WSAWS). A helical membrane pass occupies residues 373–393 (SLGIFSCLGLAVGALALGLWL). At 394 to 432 (RLRRSGKEGPQKPGLLAPMIPVEKLPGIPNLQRTPENFS) the chain is on the cytoplasmic side.

Belongs to the type I cytokine receptor family. Type 3 subfamily. On ligand binding, forms a multimer complex with IL6ST/gp130. Expression restricted to testis, lymph node and thymus. Highest level in testis.

Its subcellular location is the membrane. Receptor for interleukin-11. The receptor systems for IL6, LIF, OSM, CNTF, IL11 and CT1 can utilize IL6ST for initiating signal transmission. The IL11/IL11RA/IL6ST complex may be involved in the control of proliferation and/or differentiation of skeletogenic progenitor or other mesenchymal cells. This is Interleukin-11 receptor subunit alpha-2 (Il11ra2) from Mus musculus (Mouse).